A 121-amino-acid chain; its full sequence is Fluoride-specific ion channel FluC 2 (121 aa).

Helical transmembrane passes span 3–23 (YLFI…LSFI), 31–51 (IGTF…GTLA), 64–84 (GITT…FELV), and 92–112 (FILL…LCFL). The Na(+) site is built by Gly-71 and Thr-74.

This sequence belongs to the fluoride channel Fluc/FEX (TC 1.A.43) family.

The protein resides in the cell membrane. It catalyses the reaction fluoride(in) = fluoride(out). With respect to regulation, na(+) is not transported, but it plays an essential structural role and its presence is essential for fluoride channel function. In terms of biological role, fluoride-specific ion channel. Important for reducing fluoride concentration in the cell, thus reducing its toxicity. This chain is Fluoride-specific ion channel FluC 2, found in Staphylococcus saprophyticus subsp. saprophyticus (strain ATCC 15305 / DSM 20229 / NCIMB 8711 / NCTC 7292 / S-41).